The chain runs to 254 residues: 5-oxoprolinase subunit A (254 aa).

This sequence belongs to the LamB/PxpA family. Forms a complex composed of PxpA, PxpB and PxpC.

The catalysed reaction is 5-oxo-L-proline + ATP + 2 H2O = L-glutamate + ADP + phosphate + H(+). Catalyzes the cleavage of 5-oxoproline to form L-glutamate coupled to the hydrolysis of ATP to ADP and inorganic phosphate. The polypeptide is 5-oxoprolinase subunit A (Acinetobacter baylyi (strain ATCC 33305 / BD413 / ADP1)).